A 99-amino-acid polypeptide reads, in one-letter code: MDLIGFGYAALVTFGSILGYKRRGGVPSLIAGLFVGFLAGYGAYRVSLDKRDVKLSLFTAFFLATIMGVRFKRSKKIMPAGLVAGLSLLMILRLVLLLL.

A run of 3 helical transmembrane segments spans residues 1–21 (MDLIGFGYAALVTFGSILGYK), 24–44 (GGVPSLIAGLFVGFLAGYGAY), and 79–99 (PAGLVAGLSLLMILRLVLLLL).

The protein belongs to the TMEM14 family.

The protein localises to the mitochondrion membrane. It is found in the endoplasmic reticulum membrane. Its function is as follows. Inhibits apoptosis via negative regulation of the mitochondrial outer membrane permeabilization involved in apoptotic signaling pathway. This Sus scrofa (Pig) protein is Transmembrane protein 14A (TMEM14A).